A 255-amino-acid chain; its full sequence is Vitamin B12 import ATP-binding protein BtuD (255 aa).

One can recognise an ABC transporter domain in the interval 2–240; sequence MRVKHIAVGS…AGLAEVFKTQ (239 aa). 30–37 serves as a coordination point for ATP; that stretch reads GPNGSGKS.

The protein belongs to the ABC transporter superfamily. Vitamin B12 importer (TC 3.A.1.13.1) family. The complex is composed of two ATP-binding proteins (BtuD), two transmembrane proteins (BtuC) and a solute-binding protein (BtuF).

The protein resides in the cell inner membrane. It carries out the reaction an R-cob(III)alamin(out) + ATP + H2O = an R-cob(III)alamin(in) + ADP + phosphate + H(+). Part of the ABC transporter complex BtuCDF involved in vitamin B12 import. Responsible for energy coupling to the transport system. This is Vitamin B12 import ATP-binding protein BtuD from Vibrio parahaemolyticus serotype O3:K6 (strain RIMD 2210633).